Reading from the N-terminus, the 359-residue chain is Peptide chain release factor 1 (359 aa).

N5-methylglutamine is present on Gln235. The disordered stretch occupies residues 287 to 312 (AQEASAMRSAQVGSGDRSERIRTYNF).

This sequence belongs to the prokaryotic/mitochondrial release factor family. In terms of processing, methylated by PrmC. Methylation increases the termination efficiency of RF1.

It is found in the cytoplasm. Functionally, peptide chain release factor 1 directs the termination of translation in response to the peptide chain termination codons UAG and UAA. The chain is Peptide chain release factor 1 from Chlamydia trachomatis serovar A (strain ATCC VR-571B / DSM 19440 / HAR-13).